Reading from the N-terminus, the 627-residue chain is DEAD-box ATP-dependent RNA helicase 35A (627 aa).

2 stretches are compositionally biased toward low complexity: residues 1–15 (MAAA…AAAA) and 52–61 (SSSAAEAASD). Disordered regions lie at residues 1-23 (MAAA…EDNY) and 40-85 (LRRL…LEAS). Pro residues predominate over residues 62–72 (LPPPPPPPPNQ). Residues 182–210 (RDFRDLRLPEPMLRKLREKGIVQPTPIQV) carry the Q motif motif. The Helicase ATP-binding domain maps to 213 to 397 (LPVVLSGRDM…KSALVKPVIV (185 aa)). An ATP-binding site is contributed by 226-233 (AFTGSGKT). The DEAD box signature appears at 345–348 (DEAD). The Helicase C-terminal domain occupies 408–568 (DVIQEVEYVK…RIPPVLAELN (161 aa)). A CCHC-type zinc finger spans residues 584–601 (KGCAYCGGLGHRVTDCPK).

The protein belongs to the DEAD box helicase family. DDX41 subfamily.

It catalyses the reaction ATP + H2O = ADP + phosphate + H(+). The chain is DEAD-box ATP-dependent RNA helicase 35A from Oryza sativa subsp. japonica (Rice).